The primary structure comprises 907 residues: Putative pentatricopeptide repeat-containing protein At5g59900 (907 aa).

22 PPR repeats span residues 103-137 (STASFCILIHALVKANLFWPASSLLQTLLLRALKP), 155-185 (SSSSFDLLIQHYVRSRRVLDGVLVFKMMITK), 191-225 (EVRTLSALLHGLVKFRHFGLAMELFNDMVSVGIRP), 226-260 (DVYIYTGVIRSLCELKDLSRAKEMIAHMEATGCDV), 261-295 (NIVPYNVLIDGLCKKQKVWEAVGIKKDLAGKDLKP), 296-330 (DVVTYCTLVYGLCKVQEFEIGLEMMDEMLCLRFSP), 331-365 (SEAAVSSLVEGLRKRGKIEEALNLVKRVVDFGVSP), 366-400 (NLFVYNALIDSLCKGRKFHEAELLFDRMGKIGLRP), 401-435 (NDVTYSILIDMFCRRGKLDTALSFLGEMVDTGLKL), 436-470 (SVYPYNSLINGHCKFGDISAAEGFMAEMINKKLEP), 471-505 (TVVTYTSLMGGYCSKGKINKALRLYHEMTGKGIAP), 506-540 (SIYTFTTLLSGLFRAGLIRDAVKLFNEMAEWNVKP), 541-575 (NRVTYNVMIEGYCEEGDMSKAFEFLKEMTEKGIVP), 576-610 (DTYSYRPLIHGLCLTGQASEAKVFVDGLHKGNCEL), 611-645 (NEICYTGLLHGFCREGKLEEALSVCQEMVQRGVDL), 646-680 (DLVCYGVLIDGSLKHKDRKLFFGLLKEMHDRGLKP), 681-715 (DDVIYTSMIDAKSKTGDFKEAFGIWDLMINEGCVP), 716-750 (NEVTYTAVINGLCKAGFVNEAEVLCSKMQPVSSVP), 751-782 (NQVTYGCFLDILTKGEVDMQKAVELHNAILKG), 786-820 (NTATYNMLIRGFCRQGRIEEASELITRMIGDGVSP), 821-855 (DCITYTTMINELCRRNDVKKAIELWNSMTEKGIRP), and 856-890 (DRVAYNTLIHGCCVAGEMGKATELRNEMLRQGLIP). A disordered region spans residues 887–907 (GLIPNNKTSRTTTSNDTSSKS). Residues 891–907 (NNKTSRTTTSNDTSSKS) are compositionally biased toward low complexity.

It belongs to the PPR family. P subfamily.

In Arabidopsis thaliana (Mouse-ear cress), this protein is Putative pentatricopeptide repeat-containing protein At5g59900.